Consider the following 358-residue polypeptide: MEETRAGRYIVRAGSGGQTEDTASGAESVLATLAAVRTRRRSVVCDGPPGSPTDSARHMSDLASLALTAEFGLGCLEAYVRINAGQVLPVVWPPGWNLVLQEIETDEDFKPEDVKAWSHYLCCQTRLAFVGRFVNEGVLSPDQQKKTAVCLISDEGYVFCYVREDTAVYYLARNLMEFARVGLRAVETLHCMRYLTSSLVKRYFRPLLRAWSLGLDTMARFIIRHHGQFMPLTYPPGTELRLCNLRCFENSVEGGHLLRNIKTAFGMRVLGLGTVSLKGENAPFPHLRWPVDLIPIVVAYTGAVYACDVRDDRYIRVGDNLNTFMCLGLNLLFENRRFSGHNGIYDRVPDCPKGRQHR.

It belongs to the herpesviridae US22 family.

The protein localises to the virion tegument. This Homo sapiens (Human) protein is Protein UL24 (UL24).